A 79-amino-acid chain; its full sequence is uncharacterized protein (79 aa).

The disordered stretch occupies residues 20 to 52 (TERGAGLSPAAPPDPSPAIAPTMAEGGVPSPGP).

This is an uncharacterized protein from Homo sapiens (Human).